A 409-amino-acid chain; its full sequence is Menaquinone reductase (409 aa).

FAD-binding positions include 11 to 15 (GAGPA), 44 to 47 (CGDG), R101, V125, D288, and 300 to 301 (GI).

This sequence belongs to the geranylgeranyl reductase family. FAD is required as a cofactor.

It catalyses the reaction menaquinone-9 + AH2 = beta-dihydromenaquinone-9 + A. Its pathway is quinol/quinone metabolism; menaquinone biosynthesis. Its function is as follows. Catalyzes the reduction of a single double bond in the isoprenoid tail of menaquinone (MK-9) in M.smegmatis, likely the beta-isoprene unit, forming the predominant form of menaquinone found in mycobacteria, MK-9(II-H2). The protein is Menaquinone reductase of Mycolicibacterium smegmatis (strain ATCC 700084 / mc(2)155) (Mycobacterium smegmatis).